An 872-amino-acid polypeptide reads, in one-letter code: Leucine--tRNA ligase (872 aa).

Positions 42 to 52 (PYPSGKLHMGH) match the 'HIGH' region motif. The 'KMSKS' region motif lies at 632–636 (KMSKS). Lys635 is an ATP binding site.

It belongs to the class-I aminoacyl-tRNA synthetase family.

The protein localises to the cytoplasm. The catalysed reaction is tRNA(Leu) + L-leucine + ATP = L-leucyl-tRNA(Leu) + AMP + diphosphate. The sequence is that of Leucine--tRNA ligase from Chromobacterium violaceum (strain ATCC 12472 / DSM 30191 / JCM 1249 / CCUG 213 / NBRC 12614 / NCIMB 9131 / NCTC 9757 / MK).